The following is a 93-amino-acid chain: Putative defensin-like protein 190 (93 aa).

An N-terminal signal peptide occupies residues 1 to 30; that stretch reads MKMAKAAATNDFGFITCLVIFLVLAGISNG. Cystine bridges form between C39–C89, C55–C75, C60–C84, and C64–C86.

This sequence belongs to the DEFL family.

It is found in the secreted. The polypeptide is Putative defensin-like protein 190 (Arabidopsis thaliana (Mouse-ear cress)).